A 45-amino-acid chain; its full sequence is Cytochrome b559 subunit beta (45 aa).

Thr2 carries the N-acetylthreonine modification. The Cytoplasmic segment spans residues 2 to 17 (TSNTPNQEPVSYPIFT). Residues 18–42 (VRWVAVHTLAVPTIFFLGAIAAMQF) form a helical membrane-spanning segment. Position 24 (His24) interacts with heme. Residues 43-45 (IQR) are Lumenal-facing.

In terms of assembly, heterodimer of an alpha subunit and a beta subunit. PSII is composed of 1 copy each of membrane proteins PsbA, PsbB, PsbC, PsbD, PsbE, PsbF, PsbH, PsbI, PsbJ, PsbK, PsbL, PsbM, PsbT, PsbX, PsbY, PsbZ, Psb30/Ycf12, peripheral proteins PsbO, CyanoQ (PsbQ), PsbU, PsbV and a large number of cofactors. It forms dimeric complexes. Part of a photosystem II (PSII) assembly intermediate complex PSII-I; crystallized from a strain deleted of psbJ, it forms monomeric PSII before addition of the oxygen evolving complex. PSII-I includes 3 assembly factors not found in mature PSII (Psb27, Psb28 and Psb34). The cofactor is heme b.

The protein localises to the cellular thylakoid membrane. This b-type cytochrome is tightly associated with the reaction center of photosystem II (PSII). PSII is a light-driven water:plastoquinone oxidoreductase that uses light energy to abstract electrons from H(2)O, generating O(2) and a proton gradient subsequently used for ATP formation. It consists of a core antenna complex that captures photons, and an electron transfer chain that converts photonic excitation into a charge separation. The sequence is that of Cytochrome b559 subunit beta from Thermosynechococcus vestitus (strain NIES-2133 / IAM M-273 / BP-1).